We begin with the raw amino-acid sequence, 43 residues long: Metallothionein A (43 aa).

The interval 1 to 16 is beta; it reads SCAGSCKCKNCRCRSC. A divalent metal cation-binding residues include Cys2, Cys6, Cys8, Cys11, Cys13, Cys16, Cys20, Cys21, Cys23, Cys24, Cys28, Cys31, Cys35, and Cys37. The tract at residues 17 to 43 is alpha; that stretch reads RKSCCSCCPAGCNNCAKGCVCKEPASS.

Belongs to the metallothionein superfamily. Type 1 family.

Its function is as follows. Metallothioneins have a high content of cysteine residues that bind various heavy metals. In Colinus virginianus (Northern bobwhite), this protein is Metallothionein A.